A 394-amino-acid chain; its full sequence is Putative 8-amino-7-oxononanoate synthase (394 aa).

Arg-23 contributes to the substrate binding site. Pyridoxal 5'-phosphate is bound at residue 110–111 (GY). His-135 is a substrate binding site. Residues Ser-182, 207 to 210 (DEAH), and 238 to 241 (TFSK) each bind pyridoxal 5'-phosphate. Lys-241 is subject to N6-(pyridoxal phosphate)lysine. Thr-355 serves as a coordination point for substrate.

It belongs to the class-II pyridoxal-phosphate-dependent aminotransferase family. BioF subfamily. As to quaternary structure, homodimer. The cofactor is pyridoxal 5'-phosphate.

The catalysed reaction is 6-carboxyhexanoyl-[ACP] + L-alanine + H(+) = (8S)-8-amino-7-oxononanoate + holo-[ACP] + CO2. The protein operates within cofactor biosynthesis; biotin biosynthesis. Its function is as follows. Catalyzes the decarboxylative condensation of pimeloyl-[acyl-carrier protein] and L-alanine to produce 8-amino-7-oxononanoate (AON), [acyl-carrier protein], and carbon dioxide. The polypeptide is Putative 8-amino-7-oxononanoate synthase (bioF) (Bacillus cereus (strain Q1)).